The sequence spans 692 residues: Methionine--tRNA ligase (692 aa).

Positions 26–36 match the 'HIGH' region motif; the sequence is PYANGSIHLGH. Cysteine 157, cysteine 160, cysteine 170, and cysteine 173 together coordinate Zn(2+). Residues 342 to 346 carry the 'KMSKS' region motif; that stretch reads KMSKS. Lysine 345 provides a ligand contact to ATP. One can recognise a tRNA-binding domain in the interval 590 to 692; sequence DFAKVDLRIA…SGAQPGMRVK (103 aa).

It belongs to the class-I aminoacyl-tRNA synthetase family. MetG type 1 subfamily. As to quaternary structure, homodimer. Requires Zn(2+) as cofactor.

It is found in the cytoplasm. It carries out the reaction tRNA(Met) + L-methionine + ATP = L-methionyl-tRNA(Met) + AMP + diphosphate. Functionally, is required not only for elongation of protein synthesis but also for the initiation of all mRNA translation through initiator tRNA(fMet) aminoacylation. This is Methionine--tRNA ligase from Methylobacillus flagellatus (strain ATCC 51484 / DSM 6875 / VKM B-1610 / KT).